Reading from the N-terminus, the 897-residue chain is Alpha-actinin-2 (897 aa).

Positions 1-257 (MNSMNQIETN…IMTYVSCFYH (257 aa)) are actin-binding. Calponin-homology (CH) domains are found at residues 41-145 (KQQR…LRFA) and 154-260 (TSAK…HAFA). 4 Spectrin repeats span residues 284 to 394 (RLME…WLLN), 404 to 509 (HLAE…ALER), 519 to 630 (QLHL…SLQE), and 640 to 743 (RLRR…EVET). EF-hand domains follow at residues 756-791 (EQMN…MGYD) and 792-827 (LGEA…ETAD). Residues Asp-769, Asn-773, Asp-780, Asp-805, Asn-807, and Thr-811 each contribute to the Ca(2+) site.

It belongs to the alpha-actinin family. As to quaternary structure, homodimer; antiparallel. In terms of processing, ubiquitinated by FBXL22, leading to proteasomal degradation.

It localises to the cytoplasm. It is found in the myofibril. The protein resides in the sarcomere. Its subcellular location is the z line. Its function is as follows. F-actin cross-linking protein which is thought to anchor actin to a variety of intracellular structures. This is a bundling protein. The polypeptide is Alpha-actinin-2 (ACTN2) (Gallus gallus (Chicken)).